Consider the following 223-residue polypeptide: Ion-translocating oxidoreductase complex subunit E (223 aa).

6 helical membrane-spanning segments follow: residues 17 to 37 (NGVL…GTAT), 40 to 60 (LGMG…VAMF), 70 to 90 (IPVY…GMNA), 94 to 114 (ELYK…LPLA), 129 to 149 (FLDG…IGAV), and 182 to 202 (WGIL…LMVV).

This sequence belongs to the NqrDE/RnfAE family. In terms of assembly, the complex is composed of six subunits: RnfA, RnfB, RnfC, RnfD, RnfE and RnfG.

It localises to the cell inner membrane. Part of a membrane-bound complex that couples electron transfer with translocation of ions across the membrane. The chain is Ion-translocating oxidoreductase complex subunit E from Paramagnetospirillum magneticum (strain ATCC 700264 / AMB-1) (Magnetospirillum magneticum).